We begin with the raw amino-acid sequence, 453 residues long: tRNA modification GTPase MnmE (453 aa).

(6S)-5-formyl-5,6,7,8-tetrahydrofolate contacts are provided by arginine 22, glutamate 79, and lysine 119. One can recognise a TrmE-type G domain in the interval 215–376 (GMKVVIAGRP…LRQHLKECMG (162 aa)). Asparagine 225 is a binding site for K(+). GTP contacts are provided by residues 225-230 (NAGKSS), 244-250 (TDIAGTT), 269-272 (DTAG), and 334-337 (NKAD). Position 229 (serine 229) interacts with Mg(2+). 3 residues coordinate K(+): threonine 244, isoleucine 246, and threonine 249. Residue threonine 250 participates in Mg(2+) binding. Lysine 453 is a binding site for (6S)-5-formyl-5,6,7,8-tetrahydrofolate.

This sequence belongs to the TRAFAC class TrmE-Era-EngA-EngB-Septin-like GTPase superfamily. TrmE GTPase family. In terms of assembly, homodimer. Heterotetramer of two MnmE and two MnmG subunits. It depends on K(+) as a cofactor.

The protein resides in the cytoplasm. Functionally, exhibits a very high intrinsic GTPase hydrolysis rate. Involved in the addition of a carboxymethylaminomethyl (cmnm) group at the wobble position (U34) of certain tRNAs, forming tRNA-cmnm(5)s(2)U34. This chain is tRNA modification GTPase MnmE, found in Vibrio cholerae serotype O1 (strain ATCC 39541 / Classical Ogawa 395 / O395).